Reading from the N-terminus, the 473-residue chain is Photosystem II CP43 reaction center protein (473 aa).

The propeptide occupies 1–14; the sequence is MKTLYSLRRFYPVE. T15 carries the N-acetylthreonine modification. T15 is subject to Phosphothreonine. 5 helical membrane-spanning segments follow: residues 69–93, 134–155, 178–200, 255–275, and 291–312; these read LFEV…PHLA, LLGP…KDRN, KALY…RKIT, KPFA…LSYS, and WFNN…ASQA. E367 contributes to the [CaMn4O5] cluster binding site. The chain crosses the membrane as a helical span at residues 447–471; it reads RARAAAAGFEKGIDRDLEPVLSMTP.

Belongs to the PsbB/PsbC family. PsbC subfamily. As to quaternary structure, PSII is composed of 1 copy each of membrane proteins PsbA, PsbB, PsbC, PsbD, PsbE, PsbF, PsbH, PsbI, PsbJ, PsbK, PsbL, PsbM, PsbT, PsbX, PsbY, PsbZ, Psb30/Ycf12, at least 3 peripheral proteins of the oxygen-evolving complex and a large number of cofactors. It forms dimeric complexes. The cofactor is Binds multiple chlorophylls and provides some of the ligands for the Ca-4Mn-5O cluster of the oxygen-evolving complex. It may also provide a ligand for a Cl- that is required for oxygen evolution. PSII binds additional chlorophylls, carotenoids and specific lipids..

Its subcellular location is the plastid. It localises to the chloroplast thylakoid membrane. In terms of biological role, one of the components of the core complex of photosystem II (PSII). It binds chlorophyll and helps catalyze the primary light-induced photochemical processes of PSII. PSII is a light-driven water:plastoquinone oxidoreductase, using light energy to abstract electrons from H(2)O, generating O(2) and a proton gradient subsequently used for ATP formation. The protein is Photosystem II CP43 reaction center protein of Acorus calamus var. americanus (American sweet flag).